An 850-amino-acid polypeptide reads, in one-letter code: Polyhomeotic-like protein 2 (850 aa).

Disordered regions lie at residues 1-79 (MENE…QYLQ), 233-314 (QQTP…RAVP), 335-386 (LPQP…DHAL), 402-436 (THVHKPGNSQQCHLPTLDTGSQNGHPEGGSHPPQR), and 528-553 (MTSGNGNSASSIAGTAPQNGENKPPQ). Over residues 15–32 (SVTTNTSGTNSSSGCISS) the composition is skewed to low complexity. The segment at 33 to 56 (SGGGGGSGGRPTAPQISVYSGIPD) is interaction with BMI1. Residues 343–352 (PQPQFVAQQQ) show a composition bias toward low complexity. 2 stretches are compositionally biased toward polar residues: residues 368 to 380 (LASVSPSLALQSS) and 402 to 425 (THVHKPGNSQQCHLPTLDTGSQNG). Residues 529–543 (TSGNGNSASSIAGTA) show a composition bias toward low complexity. Residues 550–579 (KPPQAIVKPQILTHVIEGFVIQEGAEPFPV) carry the HD1 motif. Residues Lys590 and Lys592 each participate in a glycyl lysine isopeptide (Lys-Gly) (interchain with G-Cter in SUMO2) cross-link. Residues 597-624 (FLPEKPPQQDHTTTTDSEMEEPYLQESK) form a disordered region. Thr611 carries the post-translational modification Phosphothreonine. A Phosphoserine modification is found at Ser613. Lys624 is covalently cross-linked (Glycyl lysine isopeptide (Lys-Gly) (interchain with G-Cter in SUMO2)). An FCS-type zinc finger spans residues 625-659 (EEGTPLKLKCELCGRVDFAYKFKRSKRFCSMACAK). The Zn(2+) site is built by Cys634, Cys637, Cys653, and Cys657. Disordered stretches follow at residues 676 to 712 (RSKLQKAGTTTHNRRRASKASLPTLTKDTKKQPSGTV) and 725 to 764 (SQEDSSRCSDNSSYEEPLSPISASSSTSRRRQGQRDLDLP). Lys694 is covalently cross-linked (Glycyl lysine isopeptide (Lys-Gly) (interchain with G-Cter in SUMO2)). Positions 696-712 (SLPTLTKDTKKQPSGTV) are enriched in polar residues. Position 743 is a phosphoserine (Ser743). The region spanning 786–850 (WNVEDVYEFI…YARISMLKDS (65 aa)) is the SAM domain. Residue Lys839 forms a Glycyl lysine isopeptide (Lys-Gly) (interchain with G-Cter in SUMO2) linkage.

In terms of assembly, component of a PRC1-like complex. Interacts with CBX4. Interacts with BMI1, PCGF2, PHC1 and RNF2. Interacts with CHTOP. Interacts with the N-terminal region of the SP1 transcription factor and with MAPKAPK2. Interacts with SAMD7. Interacts with SAMD11. As to expression, isoform 2 is ubiquitously expressed in embryos and adult tissues at much higher level than isoform 1.

It localises to the nucleus. Component of a Polycomb group (PcG) multiprotein PRC1-like complex, a complex class required to maintain the transcriptionally repressive state of many genes, including Hox genes, throughout development. PcG PRC1 complex acts via chromatin remodeling and modification of histones; it mediates monoubiquitination of histone H2A 'Lys-119', rendering chromatin heritably changed in its expressibility. This Mus musculus (Mouse) protein is Polyhomeotic-like protein 2 (Phc2).